The chain runs to 172 residues: Lipoprotein signal peptidase (172 aa).

4 helical membrane passes run 4 to 24, 39 to 59, 69 to 89, and 93 to 113; these read LSSS…LDQV, VAIL…AFSF, WFFT…LAKL, and WTLE…NVID. Residues Asp-122 and Asp-140 contribute to the active site. The chain crosses the membrane as a helical span at residues 136-156; the sequence is FNVADMGISIGAVLLIISEFW.

It belongs to the peptidase A8 family.

Its subcellular location is the cell inner membrane. The catalysed reaction is Release of signal peptides from bacterial membrane prolipoproteins. Hydrolyzes -Xaa-Yaa-Zaa-|-(S,diacylglyceryl)Cys-, in which Xaa is hydrophobic (preferably Leu), and Yaa (Ala or Ser) and Zaa (Gly or Ala) have small, neutral side chains.. The protein operates within protein modification; lipoprotein biosynthesis (signal peptide cleavage). Its function is as follows. This protein specifically catalyzes the removal of signal peptides from prolipoproteins. This Hydrogenovibrio crunogenus (strain DSM 25203 / XCL-2) (Thiomicrospira crunogena) protein is Lipoprotein signal peptidase.